Reading from the N-terminus, the 271-residue chain is GPN-loop GTPase 3 (271 aa).

13–18 is a binding site for GTP; sequence GAGKST. The short motif at 70–72 is the Gly-Pro-Asn (GPN)-loop; involved in dimer interface element; the sequence is GPN. 173–176 lines the GTP pocket; sequence SKLD.

It belongs to the GPN-loop GTPase family. In terms of assembly, heterodimers with GPN1 or GPN2. Binds to RNA polymerase II (RNAPII).

Small GTPase required for proper nuclear import of RNA polymerase II and III (RNAPII and RNAPIII). May act at an RNAP assembly step prior to nuclear import. In Candida glabrata (strain ATCC 2001 / BCRC 20586 / JCM 3761 / NBRC 0622 / NRRL Y-65 / CBS 138) (Yeast), this protein is GPN-loop GTPase 3.